Here is a 356-residue protein sequence, read N- to C-terminus: DNA-directed RNA polymerase subunit alpha (356 aa).

The interval 1-230 (MNLHRISSEP…DLLKPLLKVE (230 aa)) is alpha N-terminal domain (alpha-NTD). The alpha C-terminal domain (alpha-CTD) stretch occupies residues 267-356 (IDQPLLPADS…IRKSYGHILG (90 aa)).

This sequence belongs to the RNA polymerase alpha chain family. As to quaternary structure, in plastids the minimal PEP RNA polymerase catalytic core is composed of four subunits: alpha, beta, beta', and beta''. When a (nuclear-encoded) sigma factor is associated with the core the holoenzyme is formed, which can initiate transcription.

The protein resides in the plastid. It localises to the chloroplast. It carries out the reaction RNA(n) + a ribonucleoside 5'-triphosphate = RNA(n+1) + diphosphate. In terms of biological role, DNA-dependent RNA polymerase catalyzes the transcription of DNA into RNA using the four ribonucleoside triphosphates as substrates. This chain is DNA-directed RNA polymerase subunit alpha, found in Zygnema circumcarinatum (Green alga).